A 327-amino-acid chain; its full sequence is Mitochondrial carnitine carrier (327 aa).

Residues 1–11 show a composition bias toward low complexity; that stretch reads MSSDTSLSESS. Residues 1–29 form a disordered region; that stretch reads MSSDTSLSESSLLKEESGSLTKSRPPIKS. 6 helical membrane passes run 33 to 49, 107 to 123, 141 to 162, 196 to 212, 244 to 260, and 293 to 313; these read RENI…GVCA, LGVT…YDVG, MGQM…TAPT, GSLA…ALYF, LAGG…VFPI, and FFPG…ATFL. 3 Solcar repeats span residues 33–126, 139–221, and 237–321; these read RENI…GKKL, LTMG…SKNY, and VNIL…THSL.

This sequence belongs to the mitochondrial carrier (TC 2.A.29) family.

It localises to the mitochondrion inner membrane. Transports carnitine, acetylcarnitine, propionylcarnitine and to a much lower extent medium- and long-chain acylcarnitines. This chain is Mitochondrial carnitine carrier (CRC1), found in Saccharomyces cerevisiae (strain ATCC 204508 / S288c) (Baker's yeast).